The following is a 206-amino-acid chain: Protein-methionine-sulfoxide reductase heme-binding subunit MsrQ (206 aa).

6 helical membrane-spanning segments follow: residues Ile14–Ala34, Phe45–Thr65, Met82–Asp102, Pro118–Thr138, Trp149–Trp169, and Gln179–Trp199.

Belongs to the MsrQ family. As to quaternary structure, heterodimer of a catalytic subunit (MsrP) and a heme-binding subunit (MsrQ). FMN is required as a cofactor. It depends on heme b as a cofactor.

Its subcellular location is the cell inner membrane. Its function is as follows. Part of the MsrPQ system that repairs oxidized periplasmic proteins containing methionine sulfoxide residues (Met-O), using respiratory chain electrons. Thus protects these proteins from oxidative-stress damage caused by reactive species of oxygen and chlorine generated by the host defense mechanisms. MsrPQ is essential for the maintenance of envelope integrity under bleach stress, rescuing a wide series of structurally unrelated periplasmic proteins from methionine oxidation. MsrQ provides electrons for reduction to the reductase catalytic subunit MsrP, using the quinone pool of the respiratory chain. This is Protein-methionine-sulfoxide reductase heme-binding subunit MsrQ from Bordetella bronchiseptica (strain ATCC BAA-588 / NCTC 13252 / RB50) (Alcaligenes bronchisepticus).